A 459-amino-acid chain; its full sequence is Bifunctional protein GlmU (459 aa).

The segment at 1-229 (MSNFAIILAA…FDESLGVNDR (229 aa)) is pyrophosphorylase. Residues 8-11 (LAAG), lysine 22, glutamine 72, and 77-78 (GT) contribute to the UDP-N-acetyl-alpha-D-glucosamine site. Aspartate 102 provides a ligand contact to Mg(2+). Positions 139, 154, 169, and 227 each coordinate UDP-N-acetyl-alpha-D-glucosamine. A Mg(2+)-binding site is contributed by asparagine 227. Positions 230-250 (VALATAESVMRRRINHKHMVN) are linker. Residues 251–459 (GVSFVNPEAT…TRLPHHPKNQ (209 aa)) are N-acetyltransferase. UDP-N-acetyl-alpha-D-glucosamine-binding residues include arginine 332 and lysine 350. The Proton acceptor role is filled by histidine 362. UDP-N-acetyl-alpha-D-glucosamine-binding residues include tyrosine 365 and asparagine 376. Residues alanine 379, 385 to 386 (NY), serine 404, alanine 422, and arginine 439 contribute to the acetyl-CoA site.

In the N-terminal section; belongs to the N-acetylglucosamine-1-phosphate uridyltransferase family. It in the C-terminal section; belongs to the transferase hexapeptide repeat family. Homotrimer. Requires Mg(2+) as cofactor.

It is found in the cytoplasm. The catalysed reaction is alpha-D-glucosamine 1-phosphate + acetyl-CoA = N-acetyl-alpha-D-glucosamine 1-phosphate + CoA + H(+). It carries out the reaction N-acetyl-alpha-D-glucosamine 1-phosphate + UTP + H(+) = UDP-N-acetyl-alpha-D-glucosamine + diphosphate. It participates in nucleotide-sugar biosynthesis; UDP-N-acetyl-alpha-D-glucosamine biosynthesis; N-acetyl-alpha-D-glucosamine 1-phosphate from alpha-D-glucosamine 6-phosphate (route II): step 2/2. Its pathway is nucleotide-sugar biosynthesis; UDP-N-acetyl-alpha-D-glucosamine biosynthesis; UDP-N-acetyl-alpha-D-glucosamine from N-acetyl-alpha-D-glucosamine 1-phosphate: step 1/1. It functions in the pathway bacterial outer membrane biogenesis; LPS lipid A biosynthesis. Catalyzes the last two sequential reactions in the de novo biosynthetic pathway for UDP-N-acetylglucosamine (UDP-GlcNAc). The C-terminal domain catalyzes the transfer of acetyl group from acetyl coenzyme A to glucosamine-1-phosphate (GlcN-1-P) to produce N-acetylglucosamine-1-phosphate (GlcNAc-1-P), which is converted into UDP-GlcNAc by the transfer of uridine 5-monophosphate (from uridine 5-triphosphate), a reaction catalyzed by the N-terminal domain. This is Bifunctional protein GlmU from Streptococcus pneumoniae serotype 2 (strain D39 / NCTC 7466).